Here is a 166-residue protein sequence, read N- to C-terminus: Small ribosomal subunit protein uS4 (166 aa).

The region spanning 102–164 (RRLQTIVWRK…HPSCLEVEKE (63 aa)) is the S4 RNA-binding domain.

It belongs to the universal ribosomal protein uS4 family. Part of the 30S ribosomal subunit. Contacts protein S5. The interaction surface between S4 and S5 is involved in control of translational fidelity.

Its function is as follows. One of the primary rRNA binding proteins, it binds directly to 16S rRNA where it nucleates assembly of the body of the 30S subunit. In terms of biological role, with S5 and S12 plays an important role in translational accuracy. The polypeptide is Small ribosomal subunit protein uS4 (Korarchaeum cryptofilum (strain OPF8)).